A 338-amino-acid chain; its full sequence is Erlin-2 (338 aa).

The Cytoplasmic portion of the chain corresponds to 1-3 (MAQ). The helical transmembrane segment at 4 to 24 (LGAVVAVAASFFCASLFSAVH) threads the bilayer. The Lumenal segment spans residues 25 to 338 (KIEEGHIGVY…DEPMEADSEN (314 aa)). Asn106 carries an N-linked (GlcNAc...) asparagine glycan. Positions 177-309 (EAIRRNYELM…DIPNMFMDSA (133 aa)) are interaction with ERLIN1. Lys267 carries the N6-acetyllysine modification.

Belongs to the band 7/mec-2 family. As to quaternary structure, forms a heteromeric complex with ERLIN1. In complex with ERLIN1, interacts with RNF170. Interacts with activated ITPR1, independently of the degree of ITPR1 polyubiquitination. Interacts with SCAP, INSIG1, SREBF1 and SREBF2 under cholesterol sufficiency conditions; indicative for an association with the SCAP-SREBP-INSIG complex. Probably part of an AMFR/gp78 and INSIG1-containing ubiquitin ligase complex involved in ERAD of HMGCR. Interacts with TMUB1; TMUB1 bridges the association with AMFR. Interacts with SYVN1 and RNF139. Interacts with TMEM259. Interacts with TMEM41B. In terms of processing, deubiquitinated by USP25; leading to stabilization.

The protein localises to the endoplasmic reticulum membrane. Its function is as follows. Component of the ERLIN1/ERLIN2 complex which mediates the endoplasmic reticulum-associated degradation (ERAD) of inositol 1,4,5-trisphosphate receptors (IP3Rs) such as ITPR1. Promotes sterol-accelerated ERAD of HMGCR probably implicating an AMFR/gp78-containing ubiquitin ligase complex. Involved in regulation of cellular cholesterol homeostasis by regulation the SREBP signaling pathway. May promote ER retention of the SCAP-SREBF complex. The polypeptide is Erlin-2 (ERLIN2) (Bos taurus (Bovine)).